A 96-amino-acid polypeptide reads, in one-letter code: Prokineticin Bm8-f (96 aa).

The signal sequence occupies residues 1–19; the sequence is MKCFAQIVVLLLVIAFSHG. 5 disulfide bridges follow: cysteine 26-cysteine 38, cysteine 32-cysteine 50, cysteine 37-cysteine 78, cysteine 60-cysteine 86, and cysteine 80-cysteine 95.

It belongs to the AVIT (prokineticin) family. In terms of tissue distribution, expressed by the skin glands.

The protein localises to the secreted. In terms of biological role, potent agonist for both PKR1/PROKR1 and PKR2/PROKR2, and inducer of a potent and long-lasting hyperalgesia. Also potentiates capsaicin-induced TRPV1 current, when tested on DRG neurons. At subnanomolar concentrations, this protein both induces potent chemotaxis of macrophages and stimulates LPS-induced production of the pro-inflammatory cytokines IL-1 and IL-12. In vivo, potently stimulates the contraction of the guinea-pig gastrointestinal (GI) smooth muscle (nanomolar concentration). This chain is Prokineticin Bm8-f, found in Bombina maxima (Giant fire-bellied toad).